Consider the following 99-residue polypeptide: Small ribosomal subunit protein uS14 (99 aa).

This sequence belongs to the universal ribosomal protein uS14 family. As to quaternary structure, part of the 30S ribosomal subunit. Contacts proteins S3 and S10.

Its function is as follows. Binds 16S rRNA, required for the assembly of 30S particles and may also be responsible for determining the conformation of the 16S rRNA at the A site. This Bacteroides fragilis (strain ATCC 25285 / DSM 2151 / CCUG 4856 / JCM 11019 / LMG 10263 / NCTC 9343 / Onslow / VPI 2553 / EN-2) protein is Small ribosomal subunit protein uS14.